The following is a 509-amino-acid chain: Poly(A) RNA polymerase GLD2-B (509 aa).

Residues 88 to 125 (PGSPPSSFQNRKRRSDEGNSPYDVKRQRFQSPQEQTVN) form a disordered region. A compositionally biased stretch (polar residues) spans 116-125 (FQSPQEQTVN). Mg(2+) contacts are provided by Asp-240 and Asp-242. In terms of domain architecture, PAP-associated spans 409–462 (LGDLLLGFLKYFAVEFDWSKDIISLREAKALPRTDDYEWRNKYICVEEPFDGSN).

Belongs to the DNA polymerase type-B-like family. GLD2 subfamily. As to quaternary structure, component of a complex at least composed of cpeb1, cpsf1, tent2/gld2, pabpc1/ePAB, parn and sympk. Following oocyte maturation, parn is expelled from the complex. Interacts with rbfox2. Interacts with sympk. The cofactor is Mg(2+). Mn(2+) serves as cofactor.

The protein localises to the cytoplasm. It carries out the reaction RNA(n) + ATP = RNA(n)-3'-adenine ribonucleotide + diphosphate. Functionally, cytoplasmic poly(A) RNA polymerase that adds successive AMP monomers to the 3'-end of specific RNAs, forming a poly(A) tail. In contrast to the canonical nuclear poly(A) RNA polymerase, it only adds poly(A) to selected cytoplasmic mRNAs during oocyte maturation. Plays a central role during oocyte maturation by mediating polyadenylation of dormant mRNAs, which contain 5'AAUAAA-3' sequence in their 3'-UTR. In immature oocytes, polyadenylation of poly(A) tails is counteracted by the ribonuclease parn. During maturation parn is excluded from the ribonucleoprotein complex, allowing poly(A) elongation and activation of mRNAs. May not play a role in replication-dependent histone mRNA degradation. This chain is Poly(A) RNA polymerase GLD2-B, found in Xenopus laevis (African clawed frog).